The primary structure comprises 272 residues: Elongation factor Ts (272 aa).

Residues Thr76–Val79 are involved in Mg(2+) ion dislocation from EF-Tu.

This sequence belongs to the EF-Ts family.

It localises to the cytoplasm. Its function is as follows. Associates with the EF-Tu.GDP complex and induces the exchange of GDP to GTP. It remains bound to the aminoacyl-tRNA.EF-Tu.GTP complex up to the GTP hydrolysis stage on the ribosome. The polypeptide is Elongation factor Ts (Corynebacterium urealyticum (strain ATCC 43042 / DSM 7109)).